The sequence spans 336 residues: Fructose-1,6-bisphosphatase class 1 (336 aa).

Mg(2+) is bound by residues E90, D112, L114, and D115. Residues D115–S118, N211, and K277 each bind substrate. E283 is a binding site for Mg(2+).

The protein belongs to the FBPase class 1 family. In terms of assembly, homotetramer. The cofactor is Mg(2+).

It is found in the cytoplasm. The enzyme catalyses beta-D-fructose 1,6-bisphosphate + H2O = beta-D-fructose 6-phosphate + phosphate. It functions in the pathway carbohydrate biosynthesis; gluconeogenesis. The sequence is that of Fructose-1,6-bisphosphatase class 1 from Pseudomonas paraeruginosa (strain DSM 24068 / PA7) (Pseudomonas aeruginosa (strain PA7)).